Here is a 257-residue protein sequence, read N- to C-terminus: UPF0246 protein RSKD131_2757 (257 aa).

Belongs to the UPF0246 family.

This is UPF0246 protein RSKD131_2757 from Cereibacter sphaeroides (strain KD131 / KCTC 12085) (Rhodobacter sphaeroides).